Reading from the N-terminus, the 300-residue chain is Ribosomal protein L11 methyltransferase (300 aa).

S-adenosyl-L-methionine-binding residues include Thr152, Gly173, Asp195, and Asn234.

Belongs to the methyltransferase superfamily. PrmA family.

The protein resides in the cytoplasm. It carries out the reaction L-lysyl-[protein] + 3 S-adenosyl-L-methionine = N(6),N(6),N(6)-trimethyl-L-lysyl-[protein] + 3 S-adenosyl-L-homocysteine + 3 H(+). Its function is as follows. Methylates ribosomal protein L11. This is Ribosomal protein L11 methyltransferase from Burkholderia vietnamiensis (strain G4 / LMG 22486) (Burkholderia cepacia (strain R1808)).